The following is a 434-amino-acid chain: Fc receptor-like protein 6 (434 aa).

The N-terminal stretch at 1 to 19 (MLLWTAVLLFVPCVGKTVW) is a signal peptide. 3 Ig-like C2-type domains span residues 20 to 95 (LYLQ…QTFT), 111 to 197 (PPVL…PQLE), and 207 to 293 (PVLT…KKLS). Residues 20–307 (LYLQAWPNPV…QVLFTPASNW (288 aa)) lie on the Extracellular side of the membrane. 3 cysteine pairs are disulfide-bonded: Cys-39–Cys-83, Cys-132–Cys-180, and Cys-228–Cys-276. A glycan (N-linked (GlcNAc...) asparagine) is linked at Asn-65. N-linked (GlcNAc...) asparagine glycosylation occurs at Asn-273. The chain crosses the membrane as a helical span at residues 308–328 (LVPWLPASLLGLMVIAAALLV). Topologically, residues 329-434 (YVRSWRKAGP…PLSDCEEVLC (106 aa)) are cytoplasmic. An ITIM motif motif is present at residues 369 to 374 (VVYSVV). Tyr-371 carries the phosphotyrosine modification.

In terms of assembly, interacts (tyrosine phosphorylated) with PTPN11. Interacts (tyrosine phosphorylated) with PTPN6, INPP5D, INPPL1 and GRB2. Interacts with class II MHC HLA-DR when the alpha chain is associated with a beta-1, beta-4 or a beta-5 but not a beta-3 chain. In terms of processing, phosphorylated on Tyr residues. Tyrosine phosphorylation induces association with phosphatase PTPN11, PTPN6, INPP5D, INPPL1 and GRB2. In terms of tissue distribution, expressed by cytolytic cells including NK cells, effector and effector-memory CD8(+) T-cells, and a subset of NKT cells (at protein level). Also expressed in gamma delta T cells and in a rare subset of effector CD4(+) T-cells (at protein level). Expressed in spleen, skin, peripheral blood leukocytes, liver, lung, bone marrow, small intestine and placenta. Expression among T-cells is greatly expanded in HIV-1 infected individuals, and includes not only effector and effector-memory CD8(+) T-cells but also populations of CD4(+) T-cells. Expression among CD8(+) T-cells and NK cells is expanded in individuals with chronic lymphocytic leukemia (CLL) but is reduced in PBMCs from patients with acute (AML), chronic myeloid leukemia (CML) and non-Hodgkin's lymphoma. Expression is higher in PBMCs and/or CD3(+) cells of patients with autoimmune diseases, such as rheumatoid arthritis (RA), systemic lupus erythematosus (SLE) and idiopathic thrombocytopenia purpura (ITP). In contrast, expression in CD3(+) cells from patients with lupus anticoagulans (LA) is higher.

The protein resides in the cell membrane. In terms of biological role, acts as a MHC class II receptor. When stimulated on its own, does not play a role in cytokine production or the release of cytotoxic granules by NK cells and cytotoxic CD8(+) T cells. Does not act as an Fc receptor. The chain is Fc receptor-like protein 6 (FCRL6) from Homo sapiens (Human).